The primary structure comprises 158 residues: 2-C-methyl-D-erythritol 2,4-cyclodiphosphate synthase (158 aa).

2 residues coordinate a divalent metal cation: Asp8 and His10. 4-CDP-2-C-methyl-D-erythritol 2-phosphate contacts are provided by residues Asp8–His10 and His34–Ser35. His42 is an a divalent metal cation binding site. Residues Asp56 to Gly58, Phe61 to Asp65, Thr132 to Glu135, and Phe139 each bind 4-CDP-2-C-methyl-D-erythritol 2-phosphate.

Belongs to the IspF family. Homotrimer. A divalent metal cation serves as cofactor.

The catalysed reaction is 4-CDP-2-C-methyl-D-erythritol 2-phosphate = 2-C-methyl-D-erythritol 2,4-cyclic diphosphate + CMP. It participates in isoprenoid biosynthesis; isopentenyl diphosphate biosynthesis via DXP pathway; isopentenyl diphosphate from 1-deoxy-D-xylulose 5-phosphate: step 4/6. In terms of biological role, involved in the biosynthesis of isopentenyl diphosphate (IPP) and dimethylallyl diphosphate (DMAPP), two major building blocks of isoprenoid compounds. Catalyzes the conversion of 4-diphosphocytidyl-2-C-methyl-D-erythritol 2-phosphate (CDP-ME2P) to 2-C-methyl-D-erythritol 2,4-cyclodiphosphate (ME-CPP) with a corresponding release of cytidine 5-monophosphate (CMP). The sequence is that of 2-C-methyl-D-erythritol 2,4-cyclodiphosphate synthase from Natranaerobius thermophilus (strain ATCC BAA-1301 / DSM 18059 / JW/NM-WN-LF).